Here is a 218-residue protein sequence, read N- to C-terminus: Methylthioribulose-1-phosphate dehydratase (218 aa).

Positions 107 and 109 each coordinate Zn(2+).

Belongs to the aldolase class II family. MtnB subfamily. Zn(2+) serves as cofactor.

It carries out the reaction 5-(methylsulfanyl)-D-ribulose 1-phosphate = 5-methylsulfanyl-2,3-dioxopentyl phosphate + H2O. The protein operates within amino-acid biosynthesis; L-methionine biosynthesis via salvage pathway; L-methionine from S-methyl-5-thio-alpha-D-ribose 1-phosphate: step 2/6. Its function is as follows. Catalyzes the dehydration of methylthioribulose-1-phosphate (MTRu-1-P) into 2,3-diketo-5-methylthiopentyl-1-phosphate (DK-MTP-1-P). The chain is Methylthioribulose-1-phosphate dehydratase from Xylella fastidiosa (strain Temecula1 / ATCC 700964).